A 251-amino-acid polypeptide reads, in one-letter code: Octanoyltransferase (251 aa).

Positions 29-216 (GVIQDTLLLL…NFGFIFKEQV (188 aa)) constitute a BPL/LPL catalytic domain. Substrate-binding positions include 74 to 81 (RGGDVTFH), 146 to 148 (AIG), and 159 to 161 (GFA). The Acyl-thioester intermediate role is filled by Cys-177.

This sequence belongs to the LipB family.

Its subcellular location is the cytoplasm. The catalysed reaction is octanoyl-[ACP] + L-lysyl-[protein] = N(6)-octanoyl-L-lysyl-[protein] + holo-[ACP] + H(+). It participates in protein modification; protein lipoylation via endogenous pathway; protein N(6)-(lipoyl)lysine from octanoyl-[acyl-carrier-protein]: step 1/2. Functionally, catalyzes the transfer of endogenously produced octanoic acid from octanoyl-acyl-carrier-protein onto the lipoyl domains of lipoate-dependent enzymes. Lipoyl-ACP can also act as a substrate although octanoyl-ACP is likely to be the physiological substrate. The polypeptide is Octanoyltransferase (Koribacter versatilis (strain Ellin345)).